The chain runs to 57 residues: Small ribosomal subunit protein bS21 (57 aa).

The tract at residues 22 to 57 (QCSKSGVLSEAKKRKHYEKPSEKRKRKATEKRNSRK) is disordered. Basic residues predominate over residues 33–57 (KKRKHYEKPSEKRKRKATEKRNSRK).

Belongs to the bacterial ribosomal protein bS21 family.

The chain is Small ribosomal subunit protein bS21 from Natranaerobius thermophilus (strain ATCC BAA-1301 / DSM 18059 / JW/NM-WN-LF).